The sequence spans 308 residues: Ribosomal RNA small subunit methyltransferase H (308 aa).

S-adenosyl-L-methionine contacts are provided by residues 46-48 (AGH), Asp63, Tyr87, Asp108, and Gln115. A disordered region spans residues 269-308 (TKRPVEASEEERGRNPRARSAKLRAAEKVAAPEGLPEVEV). The span at 271 to 282 (RPVEASEEERGR) shows a compositional bias: basic and acidic residues.

Belongs to the methyltransferase superfamily. RsmH family.

The protein resides in the cytoplasm. It carries out the reaction cytidine(1402) in 16S rRNA + S-adenosyl-L-methionine = N(4)-methylcytidine(1402) in 16S rRNA + S-adenosyl-L-homocysteine + H(+). Specifically methylates the N4 position of cytidine in position 1402 (C1402) of 16S rRNA. This chain is Ribosomal RNA small subunit methyltransferase H, found in Deinococcus geothermalis (strain DSM 11300 / CIP 105573 / AG-3a).